The primary structure comprises 220 residues: Probable 26S proteasome regulatory subunit p27 (220 aa).

In terms of domain architecture, PDZ spans 119-196; it reads ARRNNDDQAI…PVLLLREGQI (78 aa).

Belongs to the proteasome subunit p27 family. In terms of assembly, part of a transient complex containing NAS2, RPT4 and RPT5 formed during the assembly of the 26S proteasome.

Its function is as follows. Acts as a chaperone during the assembly of the 26S proteasome, specifically of the base subcomplex of the 19S regulatory complex (RC). During the base subcomplex assembly is part of a NAS2:RPT4:RPT5 module; NAS2 is released during the further base assembly process. This is Probable 26S proteasome regulatory subunit p27 (NAS2) from Saccharomyces cerevisiae (strain ATCC 204508 / S288c) (Baker's yeast).